The primary structure comprises 333 residues: Mitochondrial 2-oxoglutarate/malate carrier protein (333 aa).

Solcar repeat units lie at residues 29–127, 136–227, and 236–325; these read FRLI…LFER, PGFL…SKQF, and DNIL…MNKA. A run of 6 helical transmembrane segments spans residues 30-61, 102-120, 138-159, 202-221, 241-259, and 300-319; these read RLIALGTCGDSCTHVRQPPKTWMGATVFVQPL, GLSAGLLRQATYTTTRLGI, FLLKALIGMTAGATGAFVGTPA, GCIPTMARAVVVNAAQLASY, HFCASMISGLVTTAASMPV, and GFTPYYARLGPHTVLTFIFL.

Belongs to the mitochondrial carrier (TC 2.A.29) family. Interacts with SMIM26.

It localises to the membrane. The enzyme catalyses (S)-malate(in) + 2-oxoglutarate(out) = (S)-malate(out) + 2-oxoglutarate(in). The catalysed reaction is malonate(in) + 2-oxoglutarate(out) = malonate(out) + 2-oxoglutarate(in). It carries out the reaction succinate(in) + 2-oxoglutarate(out) = succinate(out) + 2-oxoglutarate(in). It catalyses the reaction maleate(in) + 2-oxoglutarate(out) = maleate(out) + 2-oxoglutarate(in). The enzyme catalyses oxaloacetate(in) + 2-oxoglutarate(out) = oxaloacetate(out) + 2-oxoglutarate(in). Functionally, catalyzes the transport of 2-oxoglutarate (alpha-oxoglutarate) across the inner mitochondrial membrane in an electroneutral exchange for malate. Can also exchange 2-oxoglutarate for other dicarboxylic acids such as malonate, succinate, maleate and oxaloacetate, although with lower affinity. Contributes to several metabolic processes, including the malate-aspartate shuttle, the oxoglutarate/isocitrate shuttle, in gluconeogenesis from lactate, and in nitrogen metabolism. Maintains mitochondrial fusion and fission events, and the organization and morphology of cristae. Involved in the regulation of apoptosis. Helps protect from cytotoxic-induced apoptosis by modulating glutathione levels in mitochondria. The polypeptide is Mitochondrial 2-oxoglutarate/malate carrier protein (SLC25A11) (Sus scrofa (Pig)).